Consider the following 229-residue polypeptide: 2-C-methyl-D-erythritol 4-phosphate cytidylyltransferase (229 aa).

Belongs to the IspD/TarI cytidylyltransferase family. IspD subfamily.

The catalysed reaction is 2-C-methyl-D-erythritol 4-phosphate + CTP + H(+) = 4-CDP-2-C-methyl-D-erythritol + diphosphate. The protein operates within isoprenoid biosynthesis; isopentenyl diphosphate biosynthesis via DXP pathway; isopentenyl diphosphate from 1-deoxy-D-xylulose 5-phosphate: step 2/6. Catalyzes the formation of 4-diphosphocytidyl-2-C-methyl-D-erythritol from CTP and 2-C-methyl-D-erythritol 4-phosphate (MEP). The protein is 2-C-methyl-D-erythritol 4-phosphate cytidylyltransferase of Clostridium acetobutylicum (strain ATCC 824 / DSM 792 / JCM 1419 / IAM 19013 / LMG 5710 / NBRC 13948 / NRRL B-527 / VKM B-1787 / 2291 / W).